The following is a 151-amino-acid chain: Arginine repressor (151 aa).

It belongs to the ArgR family.

The protein resides in the cytoplasm. The protein operates within amino-acid biosynthesis; L-arginine biosynthesis [regulation]. Its function is as follows. Regulates arginine biosynthesis genes. The polypeptide is Arginine repressor (Lachnospira eligens (strain ATCC 27750 / DSM 3376 / VPI C15-48 / C15-B4) (Eubacterium eligens)).